Here is a 211-residue protein sequence, read N- to C-terminus: Histidine biosynthesis bifunctional protein HisIE (211 aa).

The phosphoribosyl-AMP cyclohydrolase stretch occupies residues 1-107 (MNKLIDFSKG…FNSEIESRFK (107 aa)). A phosphoribosyl-ATP pyrophosphohydrolase region spans residues 108–211 (IQALAQTIHQ…KGERKEVREW (104 aa)).

This sequence in the N-terminal section; belongs to the PRA-CH family. The protein in the C-terminal section; belongs to the PRA-PH family.

It localises to the cytoplasm. It carries out the reaction 1-(5-phospho-beta-D-ribosyl)-ATP + H2O = 1-(5-phospho-beta-D-ribosyl)-5'-AMP + diphosphate + H(+). It catalyses the reaction 1-(5-phospho-beta-D-ribosyl)-5'-AMP + H2O = 1-(5-phospho-beta-D-ribosyl)-5-[(5-phospho-beta-D-ribosylamino)methylideneamino]imidazole-4-carboxamide. It participates in amino-acid biosynthesis; L-histidine biosynthesis; L-histidine from 5-phospho-alpha-D-ribose 1-diphosphate: step 2/9. The protein operates within amino-acid biosynthesis; L-histidine biosynthesis; L-histidine from 5-phospho-alpha-D-ribose 1-diphosphate: step 3/9. In Staphylococcus epidermidis (strain ATCC 35984 / DSM 28319 / BCRC 17069 / CCUG 31568 / BM 3577 / RP62A), this protein is Histidine biosynthesis bifunctional protein HisIE.